The sequence spans 122 residues: Ribosomal protein eL22-like 1 (122 aa).

A phosphoserine mark is found at Ser112, Ser118, and Ser120.

It belongs to the eukaryotic ribosomal protein eL22 family.

The sequence is that of Ribosomal protein eL22-like 1 (Rpl22l1) from Mus musculus (Mouse).